We begin with the raw amino-acid sequence, 181 residues long: Peptide deformylase (181 aa).

Fe cation is bound by residues Cys-99 and His-141. Glu-142 is an active-site residue. Residue His-145 coordinates Fe cation.

The protein belongs to the polypeptide deformylase family. The cofactor is Fe(2+).

The enzyme catalyses N-terminal N-formyl-L-methionyl-[peptide] + H2O = N-terminal L-methionyl-[peptide] + formate. Removes the formyl group from the N-terminal Met of newly synthesized proteins. Requires at least a dipeptide for an efficient rate of reaction. N-terminal L-methionine is a prerequisite for activity but the enzyme has broad specificity at other positions. The sequence is that of Peptide deformylase from Chlamydia muridarum (strain MoPn / Nigg).